Consider the following 200-residue polypeptide: Isochorismatase family protein 2A (200 aa).

Belongs to the isochorismatase family.

This Dictyostelium discoideum (Social amoeba) protein is Isochorismatase family protein 2A.